Consider the following 35-residue polypeptide: Water stress-responsive protein 7 (35 aa).

The sequence is that of Water stress-responsive protein 7 from Pinus pinaster (Maritime pine).